Consider the following 218-residue polypeptide: Transcription initiation factor TFIID subunit 10 (218 aa).

Composition is skewed to low complexity over residues M1–P21 and A29–A39. The segment at M1–A85 is disordered. N-acetylserine is present on S2. S44 is subject to Phosphoserine. The residue at position 48 (T48) is a Phosphothreonine. Gly residues predominate over residues T48–G62. Positions K187 to K189 match the [KR]-[STA]-K motif motif. Residue K189 is modified to Allysine; alternate. K189 is modified (N6,N6,N6-trimethyllysine; alternate).

Belongs to the TAF10 family. In terms of assembly, component of the TFIID basal transcription factor complex, composed of TATA-box-binding protein TBP, and a number of TBP-associated factors (TAFs), including TAF1, TAF2, TAF3, TAF4, TAF5, TAF6, TAF7, TAF8, TAF9, TAF10, TAF11, TAF12 and TAF13. Component of the TATA-binding protein-free TAF complex (TFTC), the PCAF histone acetylase complex and the STAGA transcription coactivator-HAT complex. The PCAF complex consists at least of TADA2L/ADA2, TADA3L/ADA3, SUPT3H, TAF5L TAF6L, TAF9, TAF10, TAF12 and TRRAP. The TFTC-HAT complex consists at least of TAF5L, TAF6L, TADA3L, SUPT3H, TAF2, TAF4, TAF5, GCN5L2/GCN5, TAF10 and TRRAP. The STAGA transcription coactivator-HAT complex consists at least of SUPT3H, GCN5L2, TAF5L, TAF6L, SUPT7L, TADA3L, TAD1L, TAF10, TAF12, TRRAP and TAF9. The STAGA core complex is associated with a subcomplex required for histone deubiquitination composed of ATXN7L3, ENY2 and USP22. Interacts with TAF3. Interacts with LOXL2. Interacts with TAF12 isoform TAFII20; the interaction is direct. Post-translationally, monomethylated at Lys-189 by SETD7, leading to increased affinity for RNA polymerase II. Lysine deamination at Lys-189 to form allysine is mediated by LOXL2. Allysine formation by LOXL2 results in release of TAF10 from promoters, leading to inhibition of TFIID-dependent transcription.

The protein resides in the nucleus. Functionally, the TFIID basal transcription factor complex plays a major role in the initiation of RNA polymerase II (Pol II)-dependent transcription. TFIID recognizes and binds promoters with or without a TATA box via its subunit TBP, a TATA-box-binding protein, and promotes assembly of the pre-initiation complex (PIC). The TFIID complex consists of TBP and TBP-associated factors (TAFs), including TAF1, TAF2, TAF3, TAF4, TAF5, TAF6, TAF7, TAF8, TAF9, TAF10, TAF11, TAF12 and TAF13. TAF10 is also component of the PCAF histone acetylase complex, the TATA-binding protein-free TAF complex (TFTC) and the STAGA transcription coactivator-HAT complex. May regulate cyclin E expression. This Homo sapiens (Human) protein is Transcription initiation factor TFIID subunit 10 (TAF10).